The sequence spans 201 residues: Small ribosomal subunit protein uS4c (201 aa).

Positions 17–44 are disordered; it reads ALPGLTNKKPRTGSDLRNQSRSGKKSQY. In terms of domain architecture, S4 RNA-binding spans 89–149; that stretch reads MRLDNILFRL…DEQKSRALIQ (61 aa).

The protein belongs to the universal ribosomal protein uS4 family. Part of the 30S ribosomal subunit. Contacts protein S5. The interaction surface between S4 and S5 is involved in control of translational fidelity.

The protein resides in the plastid. It is found in the chloroplast. One of the primary rRNA binding proteins, it binds directly to 16S rRNA where it nucleates assembly of the body of the 30S subunit. Its function is as follows. With S5 and S12 plays an important role in translational accuracy. This chain is Small ribosomal subunit protein uS4c (rps4), found in Atropa belladonna (Belladonna).